A 109-amino-acid chain; its full sequence is uncharacterized protein (109 aa).

Its subcellular location is the mitochondrion. This is an uncharacterized protein from Marchantia polymorpha (Common liverwort).